The sequence spans 971 residues: Exportin-2 (971 aa).

Met1 carries the post-translational modification N-acetylmethionine. The Importin N-terminal domain occupies 29–102; it reads AEKFLESVEG…KANIVHLMLS (74 aa). Ser112 carries the post-translational modification Phosphoserine. Residues Lys574 and Lys824 each carry the N6-acetyllysine modification. Ser931 carries the post-translational modification Phosphoserine.

This sequence belongs to the XPO2/CSE1 family. As to quaternary structure, found in a complex with CSE1L/XPO2, Ran and KPNA2. Binds with high affinity to importin-alpha only in the presence of RanGTP. The complex is dissociated by the combined action of RanBP1 and RanGAP1. Interacts with CFTR. In terms of tissue distribution, detected in brain, placenta, ovary, testis and trachea (at protein level). Widely expressed. Highly expressed in testis and in proliferating cells.

It localises to the cytoplasm. Its subcellular location is the nucleus. In terms of biological role, export receptor for importin-alpha. Mediates importin-alpha re-export from the nucleus to the cytoplasm after import substrates (cargos) have been released into the nucleoplasm. In the nucleus binds cooperatively to importin-alpha and to the GTPase Ran in its active GTP-bound form. Docking of this trimeric complex to the nuclear pore complex (NPC) is mediated through binding to nucleoporins. Upon transit of a nuclear export complex into the cytoplasm, disassembling of the complex and hydrolysis of Ran-GTP to Ran-GDP (induced by RANBP1 and RANGAP1, respectively) cause release of the importin-alpha from the export receptor. CSE1L/XPO2 then return to the nuclear compartment and mediate another round of transport. The directionality of nuclear export is thought to be conferred by an asymmetric distribution of the GTP- and GDP-bound forms of Ran between the cytoplasm and nucleus. This chain is Exportin-2 (CSE1L), found in Homo sapiens (Human).